A 525-amino-acid chain; its full sequence is GMP synthase [glutamine-hydrolyzing] (525 aa).

A Glutamine amidotransferase type-1 domain is found at 9 to 207 (RILILDFGSQ…VLEICGCAAL (199 aa)). The active-site Nucleophile is C86. Residues H181 and E183 contribute to the active site. One can recognise a GMPS ATP-PPase domain in the interval 208-400 (WTPATIIEDA…LGLPYDMLYR (193 aa)). 235-241 (SGGVDSS) provides a ligand contact to ATP.

As to quaternary structure, homodimer.

It catalyses the reaction XMP + L-glutamine + ATP + H2O = GMP + L-glutamate + AMP + diphosphate + 2 H(+). It participates in purine metabolism; GMP biosynthesis; GMP from XMP (L-Gln route): step 1/1. Functionally, catalyzes the synthesis of GMP from XMP. The polypeptide is GMP synthase [glutamine-hydrolyzing] (Edwardsiella ictaluri (strain 93-146)).